The sequence spans 353 residues: MEKTLETVPLERKKREKEQFRKLFIGGLSFETTEESLRNYYEQWGKLTDCVVMRDPASKRSRGFGFVTFSSMAEVDAAMAARPHSIDGRVVEPKRAVAREESGKPGAHVTVKKLFVGGIKEDTEEHHLRDYFEEYGKIDTIEIITDRQSGKKRGFGFVTFDDHDPVDKIFLQKYHTINGHNAEVRKALSRQEMQEVQSSRSGRGGNFGFGDSRGGGGNFGPGPGSNFRGGSDGYGSGRGFGDGYNGYGGGPGGGNFGGSPGYGGGRGGYGGGGPGYGNQGGGYGGGYDNYGGGNYGSGNYNDFGNYNQQPSNYGPMKSGNFGGSRNMGGPYGGGNYGPGGSGGSGGYGGRSRY.

M1 is modified (N-acetylmethionine). Residue T4 is modified to Phosphothreonine. The Nuclear localization signal signature appears at 9–15 (PLERKKR). 2 consecutive RRM domains span residues 21–104 (RKLF…ESGK) and 112–191 (KKLF…LSRQ). A Glycyl lysine isopeptide (Lys-Gly) (interchain with G-Cter in SUMO2) cross-link involves residue K22. A Phosphoserine modification is found at S29. Position 38 is an omega-N-methylarginine (R38). The residue at position 85 (S85) is a Phosphoserine. An N6,N6-dimethyllysine; alternate modification is found at K104. Residue K104 forms a Glycyl lysine isopeptide (Lys-Gly) (interchain with G-Cter in SUMO2); alternate linkage. Residues K112, K120, and K137 each participate in a glycyl lysine isopeptide (Lys-Gly) (interchain with G-Cter in SUMO2) cross-link. T140 carries the phosphothreonine modification. S149 is modified (phosphoserine). K152 participates in a covalent cross-link: Glycyl lysine isopeptide (Lys-Gly) (interchain with G-Cter in SUMO2). T159 is subject to Phosphothreonine. Glycyl lysine isopeptide (Lys-Gly) (interchain with G-Cter in SUMO2); alternate cross-links involve residues K168 and K173. Residues K168 and K173 each carry the N6-acetyllysine; alternate modification. Phosphothreonine is present on T176. K186 participates in a covalent cross-link: Glycyl lysine isopeptide (Lys-Gly) (interchain with G-Cter in SUMO2). 2 positions are modified to phosphoserine: S189 and S201. Residues 193-353 (MQEVQSSRSG…SGGYGGRSRY (161 aa)) are disordered. A compositionally biased stretch (gly residues) spans 202–223 (GRGGNFGFGDSRGGGGNFGPGP). R203 is modified (asymmetric dimethylarginine; alternate). R203 carries the dimethylated arginine; alternate modification. Position 203 is an omega-N-methylarginine; alternate (R203). The residue at position 212 (S212) is a Phosphoserine. An Asymmetric dimethylarginine; alternate modification is found at R213. Dimethylated arginine; alternate is present on R213. Residue R213 is modified to Omega-N-methylarginine; alternate. S225 is modified (phosphoserine). At R228 the chain carries Omega-N-methylarginine. Residues S231 and S236 each carry the phosphoserine modification. Position 238 is an omega-N-methylarginine (R238). S259 is modified (phosphoserine). At R266 the chain carries Asymmetric dimethylarginine; alternate. At R266 the chain carries Omega-N-methylarginine; alternate. The interval 308 to 347 (QQPSNYGPMKSGNFGGSRNMGGPYGGGNYGPGGSGGSGGY) is nuclear targeting sequence. The span at 320-353 (NFGGSRNMGGPYGGGNYGPGGSGGSGGYGGRSRY) shows a compositional bias: gly residues. At S324 the chain carries Phosphoserine. At R325 the chain carries Omega-N-methylarginine. Residue Y331 is modified to Phosphotyrosine. Phosphoserine occurs at positions 341 and 344. Y347 is modified (phosphotyrosine). Position 350 is an omega-N-methylarginine (R350).

As to quaternary structure, homodimer; dimerization is required for nucleocytoplasmic translocation. Identified in the spliceosome C complex. Identified in a IGF2BP1-dependent mRNP granule complex containing untranslated mRNAs. Interacts with IGF2BP1. Interacts with C9orf72. Interacts with DGCR8. Interacts with TARDBP. Interacts with CKAP5. Interacts with TBK1. Interacts with STING1. Interacts with SRC. Interacts with PPIA/CYPA. Interacts (via C-terminus) with FAM76B; the interaction results in retention of HNRNPA2B1 in the nucleus and inhibition of the NF-kappa-B-mediated inflammatory pathway. Interacts with NF-kappa-B inhibitors NFKBIA and NFKBIE; the interaction may be mediated by the RRM2 domain of HNRNPA2B1, and HNRNPA2B1 may interact simultaneously with FAM76B and either NFKBIA or NFKBIE to form a complex. In terms of processing, asymmetric dimethylation at Arg-266 constitutes the major methylation site. According to a report, methylation affects subcellular location and promotes nuclear localization. According to another report, methylation at Arg-266 does not influence nucleocytoplasmic shuttling. Sumoylated in exosomes, promoting miRNAs-binding. In the brain, isoform A2 and isoform B1 are abundant in large ganglion-type neurons, such as Purkinje cells, and are less abundant in neighboring glia cells. Isoform A2 is more abundant than isoform B1 in brain. In testis, isoform A2 and isoform B1 are present in spermatogonia and spermatocytes, but not in spermatids or sperm. Isoform A2 is more abundant in the adrenal medulla than in the cortical cells. Isoform B1 is found in both adrenal medulla and cortical cells. Isoform A2 is more abundant than isoform B1 in the adrenal gland. Isoform A2 and isoform B1 are both detected in pancreas and kidney, and at lower levels in heart and lung. Isoform B1 is more abundant than isoform A2 in heart, lung and intestine (at protein level). Isoform A2b and isoform B1b are testis-specific.

Its subcellular location is the nucleus. The protein localises to the cytoplasm. It localises to the nucleoplasm. It is found in the cytoplasmic granule. The protein resides in the secreted. Its subcellular location is the extracellular exosome. Its function is as follows. Heterogeneous nuclear ribonucleoprotein (hnRNP) that associates with nascent pre-mRNAs, packaging them into hnRNP particles. The hnRNP particle arrangement on nascent hnRNA is non-random and sequence-dependent and serves to condense and stabilize the transcripts and minimize tangling and knotting. Packaging plays a role in various processes such as transcription, pre-mRNA processing, RNA nuclear export, subcellular location, mRNA translation and stability of mature mRNAs. Forms hnRNP particles with at least 20 other different hnRNP and heterogeneous nuclear RNA in the nucleus. Involved in transport of specific mRNAs to the cytoplasm in oligodendrocytes and neurons: acts by specifically recognizing and binding the A2RE (21 nucleotide hnRNP A2 response element) or the A2RE11 (derivative 11 nucleotide oligonucleotide) sequence motifs present on some mRNAs, and promotes their transport to the cytoplasm. Specifically binds single-stranded telomeric DNA sequences, protecting telomeric DNA repeat against endonuclease digestion. Also binds other RNA molecules, such as primary miRNA (pri-miRNAs): acts as a nuclear 'reader' of the N6-methyladenosine (m6A) mark by specifically recognizing and binding a subset of nuclear m6A-containing pri-miRNAs. Binding to m6A-containing pri-miRNAs promotes pri-miRNA processing by enhancing binding of DGCR8 to pri-miRNA transcripts. Involved in miRNA sorting into exosomes following sumoylation, possibly by binding (m6A)-containing pre-miRNAs. Acts as a regulator of efficiency of mRNA splicing, possibly by binding to m6A-containing pre-mRNAs. Plays a role in the splicing of pyruvate kinase PKM by binding repressively to sequences flanking PKM exon 9, inhibiting exon 9 inclusion and resulting in exon 10 inclusion and production of the PKM M2 isoform. Also plays a role in the activation of the innate immune response. Mechanistically, senses the presence of viral DNA in the nucleus, homodimerizes and is demethylated by JMJD6. In turn, translocates to the cytoplasm where it activates the TBK1-IRF3 pathway, leading to interferon alpha/beta production. The sequence is that of Heterogeneous nuclear ribonucleoproteins A2/B1 from Rattus norvegicus (Rat).